We begin with the raw amino-acid sequence, 558 residues long: Trehalase 1 (558 aa).

The protein belongs to the glycosyl hydrolase 15 family.

It catalyses the reaction alpha,alpha-trehalose + H2O = alpha-D-glucose + beta-D-glucose. It functions in the pathway glycan degradation; trehalose degradation; D-glucose from alpha,alpha-trehalose: step 1/1. Its function is as follows. Catalyzes the hydrolysis of alpha,alpha-trehalose into two molecules of D-glucose. This chain is Trehalase 1 (treH1), found in Sulfolobus acidocaldarius (strain ATCC 33909 / DSM 639 / JCM 8929 / NBRC 15157 / NCIMB 11770).